The chain runs to 71 residues: Small ribosomal subunit protein bS18c (71 aa).

The protein belongs to the bacterial ribosomal protein bS18 family. As to quaternary structure, part of the 30S ribosomal subunit.

It localises to the plastid. It is found in the cyanelle. This chain is Small ribosomal subunit protein bS18c (rps18), found in Cyanophora paradoxa.